Consider the following 454-residue polypeptide: GTPase Der (454 aa).

EngA-type G domains lie at 4–168 (PQVA…PEKD) and 178–352 (MKIA…KQAQ). GTP-binding positions include 10-17 (GRPNVGKS), 57-61 (DTGGM), 120-123 (NKAD), 184-191 (GRRNVGKS), 231-235 (DTPGL), and 296-299 (NKWD). Residues 353-437 (SRVSTGELNR…PIKLYMQQRS (85 aa)) enclose the KH-like domain.

The protein belongs to the TRAFAC class TrmE-Era-EngA-EngB-Septin-like GTPase superfamily. EngA (Der) GTPase family. Associates with the 50S ribosomal subunit.

GTPase that plays an essential role in the late steps of ribosome biogenesis. This chain is GTPase Der, found in Rhodopirellula baltica (strain DSM 10527 / NCIMB 13988 / SH1).